A 527-amino-acid chain; its full sequence is Glucose-6-phosphate isomerase (527 aa).

Glutamate 323 serves as the catalytic Proton donor. Residues histidine 352 and lysine 454 contribute to the active site.

Belongs to the GPI family.

It is found in the cytoplasm. The enzyme catalyses alpha-D-glucose 6-phosphate = beta-D-fructose 6-phosphate. Its pathway is carbohydrate biosynthesis; gluconeogenesis. It functions in the pathway carbohydrate degradation; glycolysis; D-glyceraldehyde 3-phosphate and glycerone phosphate from D-glucose: step 2/4. Catalyzes the reversible isomerization of glucose-6-phosphate to fructose-6-phosphate. The polypeptide is Glucose-6-phosphate isomerase (Prochlorococcus marinus (strain MIT 9215)).